We begin with the raw amino-acid sequence, 380 residues long: DNA replication and repair protein RecF (380 aa).

30-37 is an ATP binding site; the sequence is GNNAQGKS.

Belongs to the RecF family.

The protein resides in the cytoplasm. The RecF protein is involved in DNA metabolism; it is required for DNA replication and normal SOS inducibility. RecF binds preferentially to single-stranded, linear DNA. It also seems to bind ATP. The chain is DNA replication and repair protein RecF from Rippkaea orientalis (strain PCC 8801 / RF-1) (Cyanothece sp. (strain PCC 8801)).